The following is a 152-amino-acid chain: Lipoprotein signal peptidase (152 aa).

The next 2 membrane-spanning stretches (helical) occupy residues 55–75 and 85–105; these read NKMW…VFYM and LGIS…DRVF. Residues aspartate 111 and aspartate 129 contribute to the active site. The helical transmembrane segment at 124-144 threads the bilayer; it reads VFNIADSALCIGVVLIIIQTV.

The protein belongs to the peptidase A8 family.

It is found in the cell membrane. It carries out the reaction Release of signal peptides from bacterial membrane prolipoproteins. Hydrolyzes -Xaa-Yaa-Zaa-|-(S,diacylglyceryl)Cys-, in which Xaa is hydrophobic (preferably Leu), and Yaa (Ala or Ser) and Zaa (Gly or Ala) have small, neutral side chains.. It functions in the pathway protein modification; lipoprotein biosynthesis (signal peptide cleavage). This protein specifically catalyzes the removal of signal peptides from prolipoproteins. The protein is Lipoprotein signal peptidase of Bacillus mycoides (strain KBAB4) (Bacillus weihenstephanensis).